A 355-amino-acid polypeptide reads, in one-letter code: 3-dehydroquinate synthase (355 aa).

Residues 71–76 (EGEASK), 105–109 (GVVGD), 129–130 (TS), Lys142, and Lys151 each bind NAD(+). Positions 184, 246, and 263 each coordinate Zn(2+).

It belongs to the sugar phosphate cyclases superfamily. Dehydroquinate synthase family. Co(2+) serves as cofactor. It depends on Zn(2+) as a cofactor. Requires NAD(+) as cofactor.

It is found in the cytoplasm. It catalyses the reaction 7-phospho-2-dehydro-3-deoxy-D-arabino-heptonate = 3-dehydroquinate + phosphate. The protein operates within metabolic intermediate biosynthesis; chorismate biosynthesis; chorismate from D-erythrose 4-phosphate and phosphoenolpyruvate: step 2/7. In terms of biological role, catalyzes the conversion of 3-deoxy-D-arabino-heptulosonate 7-phosphate (DAHP) to dehydroquinate (DHQ). This chain is 3-dehydroquinate synthase, found in Streptococcus thermophilus (strain ATCC BAA-491 / LMD-9).